Consider the following 277-residue polypeptide: Putative phosphoenolpyruvate synthase regulatory protein (277 aa).

Position 157 to 164 (157 to 164) interacts with ADP; sequence GVSRCGKT.

This sequence belongs to the pyruvate, phosphate/water dikinase regulatory protein family. PSRP subfamily.

It catalyses the reaction [pyruvate, water dikinase] + ADP = [pyruvate, water dikinase]-phosphate + AMP + H(+). The enzyme catalyses [pyruvate, water dikinase]-phosphate + phosphate + H(+) = [pyruvate, water dikinase] + diphosphate. Functionally, bifunctional serine/threonine kinase and phosphorylase involved in the regulation of the phosphoenolpyruvate synthase (PEPS) by catalyzing its phosphorylation/dephosphorylation. The chain is Putative phosphoenolpyruvate synthase regulatory protein from Enterobacter sp. (strain 638).